The primary structure comprises 365 residues: Zinc finger TRAF-type-containing protein 1-B (365 aa).

A disordered region spans residues 1–56 (MSEEREAPGPLASSSAGLGAEVGQEEVPGGAGPARLLLLPSDSDGPPKKRLRSEAE). The RING-type; degenerate zinc-finger motif lies at 72–117 (CAVCLDLPKASVYQCTNGHLMCAGCFIHLLADARLKEEQATCPNCR). The segment at 113-186 (CPNCRCEISK…PWQGPYHELT (74 aa)) adopts a TRAF-type zinc-finger fold.

It belongs to the ZFTRAF1 family. As to quaternary structure, interacts with LGALS3.

The protein resides in the cytoplasm. The protein is Zinc finger TRAF-type-containing protein 1-B of Xenopus laevis (African clawed frog).